A 716-amino-acid polypeptide reads, in one-letter code: Putative mannosyltransferase YkcB (716 aa).

8 helical membrane passes run 8 to 28 (LDIVLLLILLASAFLNIYNIW), 44 to 64 (MMQSFHNFFYASFDAAGFITV), 87 to 107 (SVILPQALAGVGSVLLMYLLI), 118 to 135 (IASFVMACTPIAVAVART), 137 to 157 (NVDALLVFFLLLATWLLFKAI), 159 to 179 (KGKLIWLLAAFFVVGVGFNTK), 180 to 200 (MLQAYMILPAFLLFYLIAANA), and 206 to 226 (IVSLVSALAVLAAVSLSWPLI). Positions 260 to 363 (TGQNSGGGQG…GSGMFGTGTP (104 aa)) are disordered. Over residues 278 to 289 (EMSSSDNTQAPP) the composition is skewed to polar residues. The span at 290 to 307 (NQSSSNSSSSDGKSSNGN) shows a compositional bias: low complexity. A compositionally biased stretch (gly residues) spans 318–347 (PSGGQGGPPSGGDGGQGGPGGDGGKGGTGT). 6 helical membrane-spanning segments follow: residues 376-396 (QISWLLPFAIFGIAGLLIAGA), 409-429 (TVFWVAWLVPIAGFFSVAEFF), 433-453 (YLIMLAPPIAALVGAGWVALV), 462-482 (WKAWLLPGAIIATTGFELFIL), 491-511 (VGWSIGVGVIGVLSAIALLLF), and 518-538 (FSYYVSLAALLALLVMPMYWA). The tract at residues 664 to 716 (VASEKWQSSSDQKTENTDSADTSSSKASGENGKMGGPGGMNQSATLYELHADE) is disordered. Residues 680-694 (TDSADTSSSKASGEN) show a composition bias toward low complexity.

The protein belongs to the glycosyltransferase 39 family.

The protein resides in the cell membrane. This is Putative mannosyltransferase YkcB (ykcB) from Bacillus subtilis (strain 168).